Consider the following 87-residue polypeptide: Small ribosomal subunit protein eS21B (87 aa).

The residue at position 1 (Met-1) is an N-acetylmethionine.

This sequence belongs to the eukaryotic ribosomal protein eS21 family. In terms of assembly, component of the small ribosomal subunit (SSU). Mature yeast ribosomes consist of a small (40S) and a large (60S) subunit. The 40S small subunit contains 1 molecule of ribosomal RNA (18S rRNA) and 33 different proteins (encoded by 57 genes). The large 60S subunit contains 3 rRNA molecules (25S, 5.8S and 5S rRNA) and 46 different proteins (encoded by 81 genes). Post-translationally, N-terminally acetylated by acetyltransferase NatB.

The protein resides in the cytoplasm. Component of the ribosome, a large ribonucleoprotein complex responsible for the synthesis of proteins in the cell. The small ribosomal subunit (SSU) binds messenger RNAs (mRNAs) and translates the encoded message by selecting cognate aminoacyl-transfer RNA (tRNA) molecules. The large subunit (LSU) contains the ribosomal catalytic site termed the peptidyl transferase center (PTC), which catalyzes the formation of peptide bonds, thereby polymerizing the amino acids delivered by tRNAs into a polypeptide chain. The nascent polypeptides leave the ribosome through a tunnel in the LSU and interact with protein factors that function in enzymatic processing, targeting, and the membrane insertion of nascent chains at the exit of the ribosomal tunnel. eS21 is required for the processing of the 20S rRNA-precursor to mature 18S rRNA in a late step of the maturation of 40S ribosomal subunits. Has a physiological role leading to 18S rRNA stability. This is Small ribosomal subunit protein eS21B from Saccharomyces cerevisiae (strain ATCC 204508 / S288c) (Baker's yeast).